The following is a 229-amino-acid chain: Sugar fermentation stimulation protein homolog (229 aa).

Belongs to the SfsA family.

The chain is Sugar fermentation stimulation protein homolog from Clostridium novyi (strain NT).